A 114-amino-acid polypeptide reads, in one-letter code: Large ribosomal subunit protein uL18 (114 aa).

The protein belongs to the universal ribosomal protein uL18 family. As to quaternary structure, part of the 50S ribosomal subunit; part of the 5S rRNA/L5/L18/L25 subcomplex. Contacts the 5S and 23S rRNAs.

Functionally, this is one of the proteins that bind and probably mediate the attachment of the 5S RNA into the large ribosomal subunit, where it forms part of the central protuberance. The chain is Large ribosomal subunit protein uL18 from Azobacteroides pseudotrichonymphae genomovar. CFP2.